We begin with the raw amino-acid sequence, 495 residues long: UDP-glycosyltransferase 73E1 (495 aa).

Residues S299, W355–A356, H373–E381, and F395–Q398 each bind UDP-alpha-D-glucose.

The protein belongs to the UDP-glycosyltransferase family.

May glycosylate diterpenes or flavonols in leaves. In Stevia rebaudiana (Stevia), this protein is UDP-glycosyltransferase 73E1.